The chain runs to 583 residues: MAPSLGSGSTRILLIVSLLLCLRQQAVVDAAIVEHTFHVGNLTVERLGQRQVITAVNGQFPGPKVEARNGDTLLVRVVNNSPYNITIHWHGVLQRLSAWADGPAMVTQCPILPGSGAGSSYTYRFNVTGQEGTLWWHAHVSFLRATVYGALLIRPRPGVPYPFPAPHAEHTLLLGEWWNASATLVDVERQAFLTGGQPANSVALTINGMPGLSHAHKEMHHLRVARGNTYLLRLVNAALNYQLFFKVAAHNFTVVAVDACYTDPYHTDVIVIAPGQTVDALMHAGAAPGRRYYVAAQVYQSIANATYSATARALLRYDDDAKDAAKTIIMSPRMPVLNDSATAQRFYGSLTGLLRDGKPTVPQRVDTRMVVTYGLAIAPCLPAQTLCNRTRGSLAASMNNVSFQLPATMSLLEASRSRSSGVYTRDFPDRPPVMFDFTNAAAVNRNMSLMVTSKGTRVKALRYNETVEVVLQNTAVLGTENHPLHLHGFNFYVLAQGTGNYYYLIRKKKIRKNLVNPQQRNTIAVPPGGWAVIRFTADNPGVWLMHCHLEAHLPFGLAMAFDVQDGPTPDAMLPPPPNDYPPC.

The N-terminal stretch at Met1 to Ala30 is a signal peptide. Plastocyanin-like domains follow at residues His38–Gly158 and Ala168–Asp320. N-linked (GlcNAc...) asparagine glycosylation is found at Asn41 and Asn84. Cu cation-binding residues include His88 and His90. A glycan (N-linked (GlcNAc...) asparagine) is linked at Asn126. His137 and His139 together coordinate Cu cation. 8 N-linked (GlcNAc...) asparagine glycosylation sites follow: Asn179, Asn251, Asn304, Asn338, Asn388, Asn400, Asn446, and Asn464. A Plastocyanin-like 3 domain is found at Asp426–Pro567. 7 residues coordinate Cu cation: His482, His485, His487, His546, Cys547, His548, and His552.

The protein belongs to the multicopper oxidase family. Cu cation serves as cofactor.

It localises to the secreted. The protein resides in the extracellular space. It is found in the apoplast. It catalyses the reaction 4 hydroquinone + O2 = 4 benzosemiquinone + 2 H2O. Its function is as follows. Lignin degradation and detoxification of lignin-derived products. This is Laccase-14 (LAC14) from Oryza sativa subsp. japonica (Rice).